A 229-amino-acid chain; its full sequence is Cytidylate kinase (229 aa).

Position 12-20 (12-20 (GPSGVGKST)) interacts with ATP.

It belongs to the cytidylate kinase family. Type 1 subfamily.

It localises to the cytoplasm. It carries out the reaction CMP + ATP = CDP + ADP. It catalyses the reaction dCMP + ATP = dCDP + ADP. The chain is Cytidylate kinase from Mesomycoplasma hyopneumoniae (strain 232) (Mycoplasma hyopneumoniae).